The chain runs to 1202 residues: DNA-directed RNA polymerase subunit beta (1202 aa).

Belongs to the RNA polymerase beta chain family. As to quaternary structure, the RNAP catalytic core consists of 2 alpha, 1 beta, 1 beta' and 1 omega subunit. When a sigma factor is associated with the core the holoenzyme is formed, which can initiate transcription.

It carries out the reaction RNA(n) + a ribonucleoside 5'-triphosphate = RNA(n+1) + diphosphate. Functionally, DNA-dependent RNA polymerase catalyzes the transcription of DNA into RNA using the four ribonucleoside triphosphates as substrates. The protein is DNA-directed RNA polymerase subunit beta of Leuconostoc mesenteroides subsp. mesenteroides (strain ATCC 8293 / DSM 20343 / BCRC 11652 / CCM 1803 / JCM 6124 / NCDO 523 / NBRC 100496 / NCIMB 8023 / NCTC 12954 / NRRL B-1118 / 37Y).